Consider the following 1024-residue polypeptide: Gamma-tubulin complex component 5 (1024 aa).

Disordered stretches follow at residues 153-203 (IGLG…GGPQ), 523-545 (NEDK…SSRQ), and 853-873 (SQAK…GPPK). A compositionally biased stretch (basic and acidic residues) spans 189-198 (TPLEEQDHNR). Low complexity predominate over residues 529–543 (DSASASSGSDQGPSS). Over residues 853-864 (SQAKEDIPRDQD) the composition is skewed to basic and acidic residues.

Belongs to the TUBGCP family. Component of the gamma-tubulin ring complex (gTuRC) consisting of TUBGCP2, TUBGCP3, TUBGCP4, TUBGCP5 and TUBGCP6 and gamma-tubulin TUBG1 or TUBG2. TUBGCP2, TUBGCP3, TUBGCP4, TUBGCP5 and TUBGCP6 assemble in a 5:5:2:1:1 stoichiometry; each is associated with a gamma-tubulin, thereby arranging 14 gamma-tubulins in a helical manner. Gamma-tubulin at the first position is blocked by TUBGCP3 at the last position, allowing 13 protafilaments to grow into a microtubule. The gTuRC (via TUBGCP3 and TUBGCP6) interacts with ACTB and MZT1; the interactions form a luminal bridge that stabilizes the initial structure during complex assembly. The gTuRC (via TUBGCP2) interacts with MZT2A/MZT2B and CDK5RAP2 (via CM1 motif); the interactions play a role in gTuRC activation.

The protein localises to the cytoplasm. Its subcellular location is the cytoskeleton. It localises to the microtubule organizing center. The protein resides in the centrosome. Component of the gamma-tubulin ring complex (gTuRC) which mediates microtubule nucleation. The gTuRC regulates the minus-end nucleation of alpha-beta tubulin heterodimers that grow into microtubule protafilaments, a critical step in centrosome duplication and spindle formation. The polypeptide is Gamma-tubulin complex component 5 (Tubgcp5) (Mus musculus (Mouse)).